The following is an 847-amino-acid chain: uncharacterized protein (847 aa).

Residues 116-126 (TGSSELTTSKT) show a composition bias toward polar residues. 3 disordered regions span residues 116 to 153 (TGSSELTTSKTPIDVDTKEQENRLKQKAEAAPKSTPIE), 208 to 245 (LKNFEDKSPPQAENASSSKKDEPISVECTDETSSRLSP), and 361 to 392 (DLEKNKESSSASLSTNKLAESPTEADKNSNVI). The segment covering 128–145 (IDVDTKEQENRLKQKAEA) has biased composition (basic and acidic residues). The segment covering 368-378 (SSSASLSTNKL) has biased composition (polar residues).

This is an uncharacterized protein from Caenorhabditis elegans.